The following is a 235-amino-acid chain: Serine protease SplA (235 aa).

The signal sequence occupies residues 1–35 (MNKNVMIKGLTALTILTSLGFAENISDQPHSIAKA). Residues histidine 74, aspartate 113, and serine 189 each act as charge relay system in the active site.

This sequence belongs to the peptidase S1B family.

It localises to the secreted. This Staphylococcus aureus protein is Serine protease SplA (splA).